The chain runs to 585 residues: Formate--tetrahydrofolate ligase (585 aa).

65-72 (TPHGEGKT) contributes to the ATP binding site.

The protein belongs to the formate--tetrahydrofolate ligase family.

It carries out the reaction (6S)-5,6,7,8-tetrahydrofolate + formate + ATP = (6R)-10-formyltetrahydrofolate + ADP + phosphate. The protein operates within one-carbon metabolism; tetrahydrofolate interconversion. The chain is Formate--tetrahydrofolate ligase from Shewanella baltica (strain OS155 / ATCC BAA-1091).